Reading from the N-terminus, the 800-residue chain is Small ribosomal subunit protein uS3c (800 aa).

The tract at residues 1-118 (MGQKVHPSGF…LQVKKDILVK (118 aa)) is S3-like 1st part. The intervening sequence (IVS) stretch occupies residues 119–664 (LQKTRQYLTN…FLDCKFEELE (546 aa)). The tract at residues 665–800 (RRKTMWVQNL…TKLVTESTGA (136 aa)) is S3-like 2nd part.

Belongs to the universal ribosomal protein uS3 family. As to quaternary structure, part of the 30S ribosomal subunit.

It is found in the plastid. It localises to the chloroplast. The polypeptide is Small ribosomal subunit protein uS3c (rps3) (Chlamydomonas moewusii (Chlamydomonas eugametos)).